Here is a 556-residue protein sequence, read N- to C-terminus: Cytochrome P450 4g1 (556 aa).

Heme is bound by residues Glu-356 and Cys-497.

It belongs to the cytochrome P450 family. Requires heme as cofactor.

The protein resides in the endoplasmic reticulum membrane. It is found in the microsome membrane. Its function is as follows. May be involved in the metabolism of insect hormones and in the breakdown of synthetic insecticides. The polypeptide is Cytochrome P450 4g1 (Cyp4g1) (Drosophila melanogaster (Fruit fly)).